A 297-amino-acid polypeptide reads, in one-letter code: MFNSNVKLGIAPIAWTNDDMPDLGKENTFEQCISEMALAGFKGSEVGNKYPRDVEVLKKALELRDMEIASAWFSAFLTTKPYEETEKAFIEHRDFLNAMGAKVIVVSEQGHSIQGQMETPIFDGKYVLNEEEWKTLAEGLNKLGALAKEKGMKLVYHHHMGTVVQTTEEIDKLMDLTDENLVYLLFDSGHLVYSGEDALEVLKKYVNRVKHVHLKDIRKKKVEEVKRDKLSFLQGVRKGAFTVPGDGDIDFEPIFKVLDDNNYEGYLLVEAEQDPAIANPLEYAIKARKYIKEKTNL.

The protein belongs to the IolE/MocC family. Glutathione serves as cofactor. Requires Co(2+) as cofactor. Mn(2+) is required as a cofactor.

It carries out the reaction scyllo-inosose = 3D-3,5/4-trihydroxycyclohexane-1,2-dione + H2O. The protein operates within polyol metabolism; myo-inositol degradation into acetyl-CoA; acetyl-CoA from myo-inositol: step 2/7. Functionally, catalyzes the dehydration of inosose (2-keto-myo-inositol, 2KMI or 2,4,6/3,5-pentahydroxycyclohexanone) to 3D-(3,5/4)-trihydroxycyclohexane-1,2-dione (D-2,3-diketo-4-deoxy-epi-inositol). This is Inosose dehydratase from Clostridium perfringens (strain 13 / Type A).